Consider the following 943-residue polypeptide: MGKKRVYEFAKEMHVDNKDVIDIAKNLGIEVKNHMSSIDQDQEAKIKGMLSKQSAGKAPSSQAAKTPAKAAKTSSAAHKEAAKKPVAASAKSNDHADAAEHSQKNAKPAAKQENKPARSNKTSDGKIILSKSTILRPRSTQTAHTNTNHNRGGNTASANNTANGRNSNRSNNNNNNRSANNANRSGNNNRSNERNRNDRNRRFDNQRVTGPMPRAGRPTAANGNPRPVAGNGGKFVKPASERQQPKRQEAVKPANAASKRSEQPRTERPRTEQPAATTNQRFTKPAPVPAAAAPKPASAGSQDNRNSRRGGGNSNFGRSNSYGNRNGFNRNNRRNKKNKRRQQSAPKKEMPQRKERPLPETLIYEVGMNAQDLGKILHREPAELIKKLFMLGVMVNQNQSLDKDTIELLATDYGIDAQEKVHEDISDLDKVFEEENKNQDNLQPRPPVVTIMGHVDHGKTTLLDKLRHTHVTEGEAGGITQHIGAYQVKLRDRLITFLDTPGHAAFTNMRARGADITDIVVLVVAADDGVMPQTIEAIHHAQAAKAPIIVAVNKIDKPGANPDHVMEQLTEYGLIPEDWGGDTIFVKISAKFGKNIDELLEMILLEADVLELKANPDQKAVGTVIEARLDKGKGPVATVLVQQGTLHTGDPIVVGNTFGRVRAMTNDHGRRVKDALPSMPVEITGINDVPQSADKFVVFADERTARAAGEERAKRAQEEERKNTNHVTLDNLFETMKEGQLKEVDVIIKADVQGSVEALAGSLEKIEVKGVRVNIIHQAVGAINESDVTLAAASNAIIIGFNVRPTALAKAQAEQDDVDIRLHSVIYKAIEEVEAAMKGMLEPTYEEKVIGTVTVRETIPVSKVGTVVGGYVDSGYITRDAGVRLVRDGIVKYEGKLGSLRRFKDDVKEVRQGFELGLTIENYNDIKVDDQIEAFTMEQVPVK.

The interval 35–359 is disordered; it reads MSSIDQDQEA…MPQRKERPLP (325 aa). Residues 57-76 are compositionally biased toward low complexity; sequence KAPSSQAAKTPAKAAKTSSA. 2 stretches are compositionally biased toward basic and acidic residues: residues 92–103 and 110–124; these read SNDHADAAEHSQ and AKQE…KTSD. The segment covering 130–141 has biased composition (polar residues); the sequence is SKSTILRPRSTQ. Residues 142-190 are compositionally biased toward low complexity; that stretch reads TAHTNTNHNRGGNTASANNTANGRNSNRSNNNNNNRSANNANRSGNNNR. Composition is skewed to basic and acidic residues over residues 191 to 205, 239 to 250, and 259 to 271; these read SNER…RFDN, ASERQQPKRQEA, and KRSE…RPRT. Low complexity-rich tracts occupy residues 289-299 and 315-330; these read PAAAAPKPASA and NFGR…GFNR. Residues 331 to 342 show a composition bias toward basic residues; that stretch reads NNRRNKKNKRRQ. The span at 346–358 shows a compositional bias: basic and acidic residues; it reads PKKEMPQRKERPL. In terms of domain architecture, tr-type G spans 444 to 613; the sequence is PRPPVVTIMG…LLEADVLELK (170 aa). The segment at 453–460 is G1; it reads GHVDHGKT. 453–460 contributes to the GTP binding site; that stretch reads GHVDHGKT. The interval 478 to 482 is G2; sequence GITQH. The tract at residues 499-502 is G3; the sequence is DTPG. GTP-binding positions include 499–503 and 553–556; these read DTPGH and NKID. The interval 553-556 is G4; sequence NKID. The segment at 589-591 is G5; that stretch reads SAK.

This sequence belongs to the TRAFAC class translation factor GTPase superfamily. Classic translation factor GTPase family. IF-2 subfamily.

Its subcellular location is the cytoplasm. Its function is as follows. One of the essential components for the initiation of protein synthesis. Protects formylmethionyl-tRNA from spontaneous hydrolysis and promotes its binding to the 30S ribosomal subunits. Also involved in the hydrolysis of GTP during the formation of the 70S ribosomal complex. This is Translation initiation factor IF-2 from Lacticaseibacillus paracasei (strain ATCC 334 / BCRC 17002 / CCUG 31169 / CIP 107868 / KCTC 3260 / NRRL B-441) (Lactobacillus paracasei).